The following is a 465-amino-acid chain: GTPase Der (465 aa).

2 EngA-type G domains span residues 3–166 and 184–358; these read FLVA…LNEF and IHFS…ACAN. GTP-binding positions include 9 to 16, 56 to 60, 118 to 121, 190 to 197, 237 to 241, and 302 to 305; these read GRANVGKS, DTGGI, NKVD, GRPNVGKS, DTAGV, and NKWD. Residues 359–443 enclose the KH-like domain; that stretch reads KKITTADATR…PIVFEFKQSE (85 aa).

It belongs to the TRAFAC class TrmE-Era-EngA-EngB-Septin-like GTPase superfamily. EngA (Der) GTPase family. As to quaternary structure, associates with the 50S ribosomal subunit.

Its function is as follows. GTPase that plays an essential role in the late steps of ribosome biogenesis. This Francisella philomiragia subsp. philomiragia (strain ATCC 25017 / CCUG 19701 / FSC 153 / O#319-036) protein is GTPase Der.